Here is a 261-residue protein sequence, read N- to C-terminus: Vacuolar iron transporter (261 aa).

A helical membrane pass occupies residues 66–86 (GQVLIAALAALFAGALSMAVG). The Fe cation site is built by glutamate 105, glutamate 108, glutamate 116, glutamate 119, and glutamate 154. The next 3 helical transmembrane spans lie at 170–190 (MVSF…GAWI), 197–217 (IGAI…VGAF), and 233–253 (GGAL…TLNI).

It belongs to the CCC1 family.

It localises to the vacuole membrane. It catalyses the reaction Fe(2+)(in) = Fe(2+)(out). Functionally, vacuolar iron transporter involved in the transfer of iron ions from the cytosol to the vacuole for intracellular iron storage. The protein is Vacuolar iron transporter of Acanthamoeba castellanii (strain ATCC 30010 / Neff).